Consider the following 125-residue polypeptide: Small ribosomal subunit protein uS12 (125 aa).

Asp-89 is subject to 3-methylthioaspartic acid.

The protein belongs to the universal ribosomal protein uS12 family. As to quaternary structure, part of the 30S ribosomal subunit. Contacts proteins S8 and S17. May interact with IF1 in the 30S initiation complex.

Its function is as follows. With S4 and S5 plays an important role in translational accuracy. Interacts with and stabilizes bases of the 16S rRNA that are involved in tRNA selection in the A site and with the mRNA backbone. Located at the interface of the 30S and 50S subunits, it traverses the body of the 30S subunit contacting proteins on the other side and probably holding the rRNA structure together. The combined cluster of proteins S8, S12 and S17 appears to hold together the shoulder and platform of the 30S subunit. The polypeptide is Small ribosomal subunit protein uS12 (Clostridium kluyveri (strain ATCC 8527 / DSM 555 / NBRC 12016 / NCIMB 10680 / K1)).